The following is a 60-amino-acid chain: Large ribosomal subunit protein uL30 (60 aa).

It belongs to the universal ribosomal protein uL30 family. As to quaternary structure, part of the 50S ribosomal subunit.

The protein is Large ribosomal subunit protein uL30 of Xanthobacter autotrophicus (strain ATCC BAA-1158 / Py2).